We begin with the raw amino-acid sequence, 783 residues long: Tricorn protease-interacting factor F2 (783 aa).

Substrate is bound by residues Glu-107 and 236–240 (GAMEN). His-271 is a binding site for Zn(2+). Catalysis depends on Glu-272, which acts as the Proton acceptor. Zn(2+) contacts are provided by His-275 and Glu-294.

It belongs to the peptidase M1 family. As to quaternary structure, monomer. Part of the Tricorn proteolytic complex. Zn(2+) is required as a cofactor.

The protein localises to the cytoplasm. Functionally, proteases F1, F2 and F3 degrade oligopeptides produced by Tricorn (themselves probably produced by the proteasome), yielding free amino acids. The protein is Tricorn protease-interacting factor F2 (trf2) of Thermoplasma acidophilum (strain ATCC 25905 / DSM 1728 / JCM 9062 / NBRC 15155 / AMRC-C165).